Here is a 306-residue protein sequence, read N- to C-terminus: tRNA dimethylallyltransferase 2 (306 aa).

11–18 provides a ligand contact to ATP; that stretch reads GPTASGKT. 13 to 18 contacts substrate; it reads TASGKT. An interaction with substrate tRNA region spans residues 36-39; the sequence is DSRQ.

This sequence belongs to the IPP transferase family. As to quaternary structure, monomer. It depends on Mg(2+) as a cofactor.

The enzyme catalyses adenosine(37) in tRNA + dimethylallyl diphosphate = N(6)-dimethylallyladenosine(37) in tRNA + diphosphate. In terms of biological role, catalyzes the transfer of a dimethylallyl group onto the adenine at position 37 in tRNAs that read codons beginning with uridine, leading to the formation of N6-(dimethylallyl)adenosine (i(6)A). This is tRNA dimethylallyltransferase 2 from Bacteroides thetaiotaomicron (strain ATCC 29148 / DSM 2079 / JCM 5827 / CCUG 10774 / NCTC 10582 / VPI-5482 / E50).